Consider the following 335-residue polypeptide: Luciferase-like monooxygenase (335 aa).

To bacterial alkanal monooxygenase alpha and beta chains.

This Escherichia coli O6:H1 (strain CFT073 / ATCC 700928 / UPEC) protein is Luciferase-like monooxygenase (yhbW).